Reading from the N-terminus, the 143-residue chain is Peptide methionine sulfoxide reductase MsrB (143 aa).

One can recognise a MsrB domain in the interval 16-139; it reads DAELRRRLTP…NSAALNFESR (124 aa). The Zn(2+) site is built by cysteine 55, cysteine 58, cysteine 104, and cysteine 107. Residue cysteine 128 is the Nucleophile of the active site.

This sequence belongs to the MsrB Met sulfoxide reductase family. Zn(2+) serves as cofactor.

The enzyme catalyses L-methionyl-[protein] + [thioredoxin]-disulfide + H2O = L-methionyl-(R)-S-oxide-[protein] + [thioredoxin]-dithiol. This Burkholderia lata (strain ATCC 17760 / DSM 23089 / LMG 22485 / NCIMB 9086 / R18194 / 383) protein is Peptide methionine sulfoxide reductase MsrB.